The sequence spans 328 residues: Delta(3,5)-Delta(2,4)-dienoyl-CoA isomerase, mitochondrial (328 aa).

The N-terminal 33 residues, 1–33 (MAAGIVASRRLRDLLTRRLTGSNYPGLSISLRL), are a transit peptide targeting the mitochondrion. Substrate-binding positions include 116–120 (AGIDL) and G174. K231 is modified (N6-succinyllysine). S268 bears the Phosphoserine mark. The Microbody targeting signal signature appears at 326–328 (SKL). Position 327 is an N6-acetyllysine (K327).

Belongs to the enoyl-CoA hydratase/isomerase family. Homohexamer.

Its subcellular location is the mitochondrion. The protein localises to the peroxisome. It catalyses the reaction (3E,5Z)-octadienoyl-CoA = (2E,4E)-octadienoyl-CoA. The enzyme catalyses (3E,5Z,8Z,11Z,14Z)-eicosapentaenoyl-CoA = (2E,4E,8Z,11Z,14Z)-eicosapentaenoyl-CoA. Its pathway is lipid metabolism; fatty acid beta-oxidation. Isomerization of 3-trans,5-cis-dienoyl-CoA to 2-trans,4-trans-dienoyl-CoA. This chain is Delta(3,5)-Delta(2,4)-dienoyl-CoA isomerase, mitochondrial, found in Homo sapiens (Human).